A 155-amino-acid chain; its full sequence is Interleukin-2 (155 aa).

A signal peptide spans 1-20; it reads MYKIQLLSCIALTLALVANG. Residue T23 is glycosylated (O-linked (GalNAc...) threonine). The cysteines at positions 79 and 127 are disulfide-linked.

This sequence belongs to the IL-2 family.

Its subcellular location is the secreted. Its function is as follows. Cytokine produced by activated CD4-positive helper T-cells and to a lesser extend activated CD8-positive T-cells and natural killer (NK) cells that plays pivotal roles in the immune response and tolerance. Binds to a receptor complex composed of either the high-affinity trimeric IL-2R (IL2RA/CD25, IL2RB/CD122 and IL2RG/CD132) or the low-affinity dimeric IL-2R (IL2RB and IL2RG). Interaction with the receptor leads to oligomerization and conformation changes in the IL-2R subunits resulting in downstream signaling starting with phosphorylation of JAK1 and JAK3. In turn, JAK1 and JAK3 phosphorylate the receptor to form a docking site leading to the phosphorylation of several substrates including STAT5. This process leads to activation of several pathways including STAT, phosphoinositide-3-kinase/PI3K and mitogen-activated protein kinase/MAPK pathways. Functions as a T-cell growth factor and can increase NK-cell cytolytic activity as well. Promotes strong proliferation of activated B-cells and subsequently immunoglobulin production. Plays a pivotal role in regulating the adaptive immune system by controlling the survival and proliferation of regulatory T-cells, which are required for the maintenance of immune tolerance. Moreover, participates in the differentiation and homeostasis of effector T-cell subsets, including Th1, Th2, Th17 as well as memory CD8-positive T-cells. The chain is Interleukin-2 (IL2) from Ovis aries (Sheep).